The primary structure comprises 330 residues: HTH-type transcriptional regulator GanR (330 aa).

The HTH lacI-type domain maps to 2–57; it reads ATIKDIAQEAGFSISTVSRVLNNDESLSVPDETREKIYEAAEKLNYRKKTVRPLVK. Positions 4 to 23 form a DNA-binding region, H-T-H motif; sequence IKDIAQEAGFSISTVSRVLN.

Negatively regulates the expression of the ganSPQAB operon. Inhibits transcription of the operon by binding to an operator in the promoter region. In the presence of galactobiose, GanR dissociates from the promoter, resulting in the expression of the gan operon. This Bacillus subtilis (strain 168) protein is HTH-type transcriptional regulator GanR.